Here is a 58-residue protein sequence, read N- to C-terminus: Bowman-Birk type wound-induced trypsin inhibitor (58 aa).

Cystine bridges form between C4-C57, C5-C20, C8-C53, C10-C18, C27-C34, C31-C46, and C36-C44.

Belongs to the Bowman-Birk serine protease inhibitor family.

The polypeptide is Bowman-Birk type wound-induced trypsin inhibitor (Medicago sativa (Alfalfa)).